A 126-amino-acid chain; its full sequence is Histone H2B 5 (126 aa).

Low complexity predominate over residues M1–K12. The segment at M1–K35 is disordered. N6-acetyllysine occurs at positions 6 and 13. Positions K13–R34 are enriched in basic residues. Phosphoserine is present on S15. K16 and K21 each carry N6-acetyllysine. Residue S113 is glycosylated (O-linked (GlcNAc) serine). Residue K121 forms a Glycyl lysine isopeptide (Lys-Gly) (interchain with G-Cter in ubiquitin) linkage.

It belongs to the histone H2B family. In terms of assembly, the nucleosome is a histone octamer containing two molecules each of H2A, H2B, H3 and H4 assembled in one H3-H4 heterotetramer and two H2A-H2B heterodimers. The octamer wraps approximately 147 bp of DNA. In terms of processing, monoubiquitination of Lys-121 by the BRE1 gives a specific tag for epigenetic transcriptional activation and is also prerequisite for histone H3 'Lys-4' and 'Lys-79' methylation. Post-translationally, phosphorylated on Ser-15 during apoptosis; which facilitates apoptotic chromatin condensation. GlcNAcylation at Ser-113 promotes monoubiquitination of Lys-121. It fluctuates in response to extracellular glucose, and associates with transcribed genes.

Its subcellular location is the nucleus. It is found in the chromosome. In terms of biological role, core component of nucleosome. Nucleosomes wrap and compact DNA into chromatin, limiting DNA accessibility to the cellular machineries which require DNA as a template. Histones thereby play a central role in transcription regulation, DNA repair, DNA replication and chromosomal stability. DNA accessibility is regulated via a complex set of post-translational modifications of histones, also called histone code, and nucleosome remodeling. The chain is Histone H2B 5 (H2B-V) from Gallus gallus (Chicken).